A 560-amino-acid chain; its full sequence is Arginine--tRNA ligase (560 aa).

The 'HIGH' region signature appears at 122–132 (ANPNGPLHIGH).

The protein belongs to the class-I aminoacyl-tRNA synthetase family.

The protein resides in the cytoplasm. The enzyme catalyses tRNA(Arg) + L-arginine + ATP = L-arginyl-tRNA(Arg) + AMP + diphosphate. This is Arginine--tRNA ligase (argS) from Methanothermobacter thermautotrophicus (strain ATCC 29096 / DSM 1053 / JCM 10044 / NBRC 100330 / Delta H) (Methanobacterium thermoautotrophicum).